The chain runs to 232 residues: 7-cyano-7-deazaguanine synthase (232 aa).

8–18 contributes to the ATP binding site; it reads FSGGQDSTTCL. Zn(2+)-binding residues include C189, C198, C201, and C204.

It belongs to the QueC family. Zn(2+) is required as a cofactor.

It catalyses the reaction 7-carboxy-7-deazaguanine + NH4(+) + ATP = 7-cyano-7-deazaguanine + ADP + phosphate + H2O + H(+). Its pathway is purine metabolism; 7-cyano-7-deazaguanine biosynthesis. Its function is as follows. Catalyzes the ATP-dependent conversion of 7-carboxy-7-deazaguanine (CDG) to 7-cyano-7-deazaguanine (preQ(0)). The protein is 7-cyano-7-deazaguanine synthase of Serratia proteamaculans (strain 568).